Consider the following 255-residue polypeptide: Indole-3-glycerol phosphate synthase (255 aa).

It belongs to the TrpC family.

The catalysed reaction is 1-(2-carboxyphenylamino)-1-deoxy-D-ribulose 5-phosphate + H(+) = (1S,2R)-1-C-(indol-3-yl)glycerol 3-phosphate + CO2 + H2O. Its pathway is amino-acid biosynthesis; L-tryptophan biosynthesis; L-tryptophan from chorismate: step 4/5. This chain is Indole-3-glycerol phosphate synthase (trpC), found in Priestia megaterium (strain ATCC 12872 / QMB1551) (Bacillus megaterium).